A 1151-amino-acid polypeptide reads, in one-letter code: Error-prone DNA polymerase (1151 aa).

Residues 1108-1151 are disordered; the sequence is HPVPSGDALIEPLNDDRRDHADAPAQKIRHPRNVRILPPSRDFH.

The protein belongs to the DNA polymerase type-C family. DnaE2 subfamily.

It is found in the cytoplasm. It carries out the reaction DNA(n) + a 2'-deoxyribonucleoside 5'-triphosphate = DNA(n+1) + diphosphate. In terms of biological role, DNA polymerase involved in damage-induced mutagenesis and translesion synthesis (TLS). It is not the major replicative DNA polymerase. In Bradyrhizobium diazoefficiens (strain JCM 10833 / BCRC 13528 / IAM 13628 / NBRC 14792 / USDA 110), this protein is Error-prone DNA polymerase.